A 536-amino-acid polypeptide reads, in one-letter code: L-ornithine N(5)-monooxygenase SIDA (536 aa).

Positions 1-25 are disordered; sequence MSPHRETTGDESTTTTVPQNGTNGA. FAD-binding positions include 115 to 123 and Gln134; that span reads EKQTRFAWH. L-ornithine is bound at residue Lys139. Val200 contacts FAD. Arg310 is a binding site for NADP(+). Residues 324–327 and Asn354 each bind L-ornithine; that span reads NSIF. 515–517 lines the FAD pocket; sequence TLL. L-ornithine is bound at residue Ser518.

The protein belongs to the lysine N(6)-hydroxylase/L-ornithine N(5)-oxygenase family. Homotetramer. The cofactor is FAD.

The catalysed reaction is L-ornithine + NADH + O2 = N(5)-hydroxy-L-ornithine + NAD(+) + H2O. The enzyme catalyses L-ornithine + NADPH + O2 = N(5)-hydroxy-L-ornithine + NADP(+) + H2O. The protein operates within siderophore biosynthesis. Functionally, L-ornithine N(5)-monooxygenase; part of the gene cluster that mediates the biosynthesis of at least 11 siderophores, including beauverichelin A, dimerumic acid (DA), Na-dimethyl coprogen (NADC), eleutherazine B, ferricrocin (FC), fusarinine A, fusarinine C (FsC), metachelin A, mevalonolactone, rhodotorulic acid (RA) and tenellin. This cocktail of siderophores for iron metabolism is essential for virulence, and more specifically for the fungal virulence in penetrating through the host cuticle. Siderophore synthesis is also involved in conidial germination under iron-deficient conditions. SIDA initiates the biosynthesis of these siderophores with the enzymatic hydroxylation of ornithine. SIDA is indispensable for the production of most siderophores including fusarinine C and ferricrocin but not mevalonolactone and eleutherazine B. However, SIDA mediates the metabolic interplay between synthesis of mevalonolactone and eleutherazine B and other siderophores. The protein is L-ornithine N(5)-monooxygenase SIDA of Beauveria bassiana (strain ARSEF 2860) (White muscardine disease fungus).